We begin with the raw amino-acid sequence, 466 residues long: Methylenetetrahydrofolate--tRNA-(uracil-5-)-methyltransferase TrmFO (466 aa).

14-19 (GGGLAG) lines the FAD pocket.

Belongs to the MnmG family. TrmFO subfamily. It depends on FAD as a cofactor.

The protein resides in the cytoplasm. It catalyses the reaction uridine(54) in tRNA + (6R)-5,10-methylene-5,6,7,8-tetrahydrofolate + NADH + H(+) = 5-methyluridine(54) in tRNA + (6S)-5,6,7,8-tetrahydrofolate + NAD(+). It carries out the reaction uridine(54) in tRNA + (6R)-5,10-methylene-5,6,7,8-tetrahydrofolate + NADPH + H(+) = 5-methyluridine(54) in tRNA + (6S)-5,6,7,8-tetrahydrofolate + NADP(+). Functionally, catalyzes the folate-dependent formation of 5-methyl-uridine at position 54 (M-5-U54) in all tRNAs. In Brucella suis (strain ATCC 23445 / NCTC 10510), this protein is Methylenetetrahydrofolate--tRNA-(uracil-5-)-methyltransferase TrmFO.